The primary structure comprises 415 residues: Putative F-box protein At5g40050 (415 aa).

The 47-residue stretch at 13–59 folds into the F-box domain; sequence IDSISPLPDELLSHILSFLPTKRAASTSILSKRWRTLFPLMNHLCAS.

This is Putative F-box protein At5g40050 from Arabidopsis thaliana (Mouse-ear cress).